Reading from the N-terminus, the 215-residue chain is ATP phosphoribosyltransferase (215 aa).

It belongs to the ATP phosphoribosyltransferase family. Short subfamily. In terms of assembly, heteromultimer composed of HisG and HisZ subunits.

Its subcellular location is the cytoplasm. It catalyses the reaction 1-(5-phospho-beta-D-ribosyl)-ATP + diphosphate = 5-phospho-alpha-D-ribose 1-diphosphate + ATP. It participates in amino-acid biosynthesis; L-histidine biosynthesis; L-histidine from 5-phospho-alpha-D-ribose 1-diphosphate: step 1/9. Catalyzes the condensation of ATP and 5-phosphoribose 1-diphosphate to form N'-(5'-phosphoribosyl)-ATP (PR-ATP). Has a crucial role in the pathway because the rate of histidine biosynthesis seems to be controlled primarily by regulation of HisG enzymatic activity. The sequence is that of ATP phosphoribosyltransferase from Prochlorococcus marinus (strain MIT 9215).